The chain runs to 464 residues: Soluble pyridine nucleotide transhydrogenase (464 aa).

Residue 35-44 coordinates FAD; sequence EASSQVGGSC.

The protein belongs to the class-I pyridine nucleotide-disulfide oxidoreductase family. FAD serves as cofactor.

It localises to the cytoplasm. The enzyme catalyses NAD(+) + NADPH = NADH + NADP(+). Its function is as follows. Conversion of NADPH, generated by peripheral catabolic pathways, to NADH, which can enter the respiratory chain for energy generation. The chain is Soluble pyridine nucleotide transhydrogenase from Marinomonas sp. (strain MWYL1).